We begin with the raw amino-acid sequence, 323 residues long: Peroxisome biogenesis protein 20 (323 aa).

Residue Cys-8 forms a Glycyl cysteine thioester (Cys-Gly) (interchain with G-Cter in ubiquitin) linkage. Residue Lys-19 forms a Glycyl lysine isopeptide (Lys-Gly) (interchain with G-Cter in ubiquitin) linkage. Short sequence motifs (wxxxF/Y motif) lie at residues 89-93, 102-105, and 141-145; these read WSSEF, WVED, and WTQEF.

It belongs to the peroxisomal targeting signal receptor family. Interacts (via WxxxF/Y and LVxEF motifs) with PEX14; promoting translocation through the PEX13-PEX14 docking complex. Interacts with PEX7. Post-translationally, monoubiquitinated at Cys-8 by PEX2 during PEX20 passage through the PEX2-PEX10-PEX12 retrotranslocation channel: monoubiquitination acts as a signal for PEX20 extraction and is required for proper export from peroxisomes and recycling. When PEX5 recycling is compromised, polyubiquitinated at Lys-19 by PEX10 during its passage through the retrotranslocation channel, leading to its degradation.

The protein resides in the cytoplasm. Its subcellular location is the cytosol. The protein localises to the peroxisome matrix. Functionally, coreceptor required for the peroxisomal import of proteins containing a C-terminal PTS2-type peroxisomal targeting signal, such as 3-oxoacyl-CoA thiolase. Acts via its interaction with PEX7, promoting association between PEX7 bound to cargo proteins and the PEX13-PEX14 docking complex. PEX20 along with PEX7 and PTS2-containing cargo proteins are tranlocated into peroxisomes by passing through the PEX13-PEX14 docking complex. PEX20 coreceptor is then retrotranslocated into the cytosol, leading to release of bound cargo in the peroxisome matrix, and reset for a subsequent peroxisome import cycle. Also mediates peroxisomal import of proteins that do not contain PTS1- or PTS2-type peroxisomal targeting signals, such as acyl-CoA oxidases (Aox) izozymes. Import of acyl-CoA oxidases (Aox) izozymes is independent of PEX7. Required for PEX7 ubiquitination. The protein is Peroxisome biogenesis protein 20 of Komagataella pastoris (Yeast).